We begin with the raw amino-acid sequence, 127 residues long: Fatty acid-binding protein, liver (127 aa).

Methionine 1 carries the post-translational modification N-acetylmethionine. A Phosphoserine modification is found at serine 11. Lysine 31 and lysine 36 each carry N6-succinyllysine. Position 39 is a phosphoserine (serine 39). The residue at position 46 (lysine 46) is an N6-succinyllysine. Threonine 51 carries the phosphothreonine modification. N6-succinyllysine is present on residues lysine 57 and lysine 78. Lysine 84 carries the post-translational modification N6-acetyllysine; alternate. Lysine 84 carries the N6-succinyllysine; alternate modification. N6-succinyllysine is present on lysine 90. Position 100 is a phosphoserine (serine 100). Residue lysine 121 is modified to N6-succinyllysine.

The protein belongs to the calycin superfamily. Fatty-acid binding protein (FABP) family.

It localises to the cytoplasm. Plays a role in lipoprotein-mediated cholesterol uptake in hepatocytes. Binds cholesterol. Binds free fatty acids and their coenzyme A derivatives, bilirubin, and some other small molecules in the cytoplasm. May be involved in intracellular lipid transport. This is Fatty acid-binding protein, liver (Fabp1) from Mus musculus (Mouse).